The chain runs to 389 residues: Growth/differentiation factor 2 (389 aa).

An N-terminal signal peptide occupies residues 1–20 (MWRVGHLLLLMSIVFRITEE). A propeptide spanning residues 21 to 280 (KSLGDAGSLE…PVSNRHRRRK (260 aa)) is cleaved from the precursor. N-linked (GlcNAc...) asparagine glycosylation is found at asparagine 65, asparagine 118, asparagine 127, and asparagine 232. Polar residues predominate over residues 263-272 (QQQVGNQAPV). The disordered stretch occupies residues 263–284 (QQQVGNQAPVSNRHRRRKRKAK). Over residues 274–284 (NRHRRRKRKAK) the composition is skewed to basic residues. Disulfide bonds link cysteine 288/cysteine 354, cysteine 317/cysteine 386, and cysteine 321/cysteine 388. The N-linked (GlcNAc...) asparagine glycan is linked to asparagine 342.

It belongs to the TGF-beta family. In terms of assembly, homodimer; disulfide-linked. Post-translationally, a reversible disulfide bond can be formed between the two subunits in the homodimer; this has no effect on gdf2 activity.

Its subcellular location is the secreted. In terms of biological role, potent circulating inhibitor of angiogenesis. Signals through the type I activin receptor ACVRL1 but not other Alks. Signaling through SMAD1 in endothelial cells requires TGF-beta coreceptor endoglin/eng. The polypeptide is Growth/differentiation factor 2 (gdf2) (Danio rerio (Zebrafish)).